Reading from the N-terminus, the 348-residue chain is Rhodopsin (348 aa).

Residue Met1 is modified to N-acetylmethionine. Over 1–36 the chain is Extracellular; the sequence is MNGTEGPNFYVPYSNKSGVVRSPYEEPQYYLAEPWM. Asn2 and Asn15 each carry an N-linked (GlcNAc...) asparagine glycan. Residues 37–61 form a helical membrane-spanning segment; sequence FSCLAAYMFMLIVLGFPINFLTLYV. The Cytoplasmic portion of the chain corresponds to 62 to 73; it reads TIQHKKLRTPLN. The helical transmembrane segment at 74–96 threads the bilayer; sequence YILLNLAVADLFMVICGFTTTLV. The Extracellular segment spans residues 97 to 110; sequence TSLNGYFVFGTTGC. Cys110 and Cys187 are disulfide-bonded. The chain crosses the membrane as a helical span at residues 111–133; the sequence is LVEGFFATTGGEVALWALVVLAI. Positions 134–136 match the 'Ionic lock' involved in activated form stabilization motif; the sequence is ERY. The Cytoplasmic portion of the chain corresponds to 134-152; that stretch reads ERYIVVCKPMSNFRFGENH. A helical membrane pass occupies residues 153 to 173; that stretch reads AIMGVAFTWIMALACSVPPIF. At 174-202 the chain is on the extracellular side; that stretch reads GWSRYIPEGMQCSCGIDYYTLNPEFNNES. Glu201 contributes to the Zn(2+) binding site. The helical transmembrane segment at 203 to 224 threads the bilayer; sequence FVIYMFVVHFIIPLTVIFFCYG. At 225 to 252 the chain is on the cytoplasmic side; it reads QLVFTVKEAAAQQQESATTQKAEKEVTR. The chain crosses the membrane as a helical span at residues 253–274; sequence MVIIMVIAFLICWVPYASVAFY. Over 275–286 the chain is Extracellular; that stretch reads IFTHQGSDFGPI. Gln279 provides a ligand contact to Zn(2+). A helical membrane pass occupies residues 287 to 308; it reads FMTLPAFFAKSSSIYNPVIYIM. At Lys296 the chain carries N6-(retinylidene)lysine. Topologically, residues 309–348 are cytoplasmic; the sequence is MNKQFRNCMITTLCCGKNPLGDDEASTTASKTETSQVAPA. S-palmitoyl cysteine attachment occurs at residues Cys322 and Cys323. The segment at 330 to 348 is interaction with SAG; that stretch reads DDEASTTASKTETSQVAPA. Position 334 is a phosphoserine (Ser334). Phosphothreonine occurs at positions 335 and 336. A Phosphoserine modification is found at Ser338. Phosphothreonine occurs at positions 340 and 342. A Phosphoserine modification is found at Ser343.

The protein belongs to the G-protein coupled receptor 1 family. Opsin subfamily. In terms of assembly, homodimer. May form a complex composed of RHO, GRK1 and RCVRN in a Ca(2+)-dependent manner; RCVRN prevents the interaction between GRK1 and RHO. Interacts with GRK1. Interacts (phosphorylated form) with SAG. Interacts with GNAT1. Interacts with GNAT3. SAG and G-proteins compete for a common binding site. Interacts with PRCD; the interaction promotes PRCD stability. Forms a complex with ASAP1 and ARF4. Forms a complex with ASAP1, RAB11A, Rabin8/RAB3IP, ARF4 and RAB11FIP3; the complex regulates Golgi-to-cilia rhodopsin/RHO transport in photoreceptors. In terms of processing, phosphorylated on some or all of the serine and threonine residues present in the C-terminal region. Contains one covalently linked retinal chromophore. Upon light absorption, the covalently bound 11-cis-retinal is converted to all-trans-retinal. After hydrolysis of the Schiff base and release of the covalently bound all-trans-retinal, active rhodopsin is regenerated by binding of a fresh molecule of 11-cis-retinal.

The protein resides in the membrane. It is found in the cell projection. It localises to the cilium. The protein localises to the photoreceptor outer segment. Photoreceptor required for image-forming vision at low light intensity. Required for photoreceptor cell viability after birth. Light-induced isomerization of 11-cis to all-trans retinal triggers a conformational change that activates signaling via G-proteins. Subsequent receptor phosphorylation mediates displacement of the bound G-protein alpha subunit by the arrestin SAG and terminates signaling. In Sminthopsis crassicaudata (Fat-tailed dunnart), this protein is Rhodopsin (RHO).